The primary structure comprises 373 residues: ATP phosphoribosyltransferase regulatory subunit (373 aa).

Belongs to the class-II aminoacyl-tRNA synthetase family. HisZ subfamily. In terms of assembly, heteromultimer composed of HisG and HisZ subunits.

The protein localises to the cytoplasm. The protein operates within amino-acid biosynthesis; L-histidine biosynthesis; L-histidine from 5-phospho-alpha-D-ribose 1-diphosphate: step 1/9. Its function is as follows. Required for the first step of histidine biosynthesis. May allow the feedback regulation of ATP phosphoribosyltransferase activity by histidine. This Rhizobium leguminosarum bv. trifolii (strain WSM2304) protein is ATP phosphoribosyltransferase regulatory subunit.